The sequence spans 471 residues: Adenosylhomocysteinase (471 aa).

3 residues coordinate substrate: Thr60, Asp135, and Glu196. 197–199 (TTT) provides a ligand contact to NAD(+). Positions 226 and 230 each coordinate substrate. NAD(+) is bound by residues Asn231, 260–265 (GYGDVG), Glu283, Asn318, 339–341 (IGH), and Asn387.

This sequence belongs to the adenosylhomocysteinase family. It depends on NAD(+) as a cofactor.

The protein localises to the cytoplasm. It catalyses the reaction S-adenosyl-L-homocysteine + H2O = L-homocysteine + adenosine. The protein operates within amino-acid biosynthesis; L-homocysteine biosynthesis; L-homocysteine from S-adenosyl-L-homocysteine: step 1/1. In terms of biological role, may play a key role in the regulation of the intracellular concentration of adenosylhomocysteine. The polypeptide is Adenosylhomocysteinase (Chlorobium luteolum (strain DSM 273 / BCRC 81028 / 2530) (Pelodictyon luteolum)).